Consider the following 503-residue polypeptide: Putative acyl--CoA ligase YdaB (503 aa).

This sequence belongs to the ATP-dependent AMP-binding enzyme family.

The polypeptide is Putative acyl--CoA ligase YdaB (ydaB) (Bacillus subtilis (strain 168)).